A 659-amino-acid polypeptide reads, in one-letter code: MPSSLTKTESNSDPRTNIQQVPKALDKNVTNSGNLDSTSSSTGSITEDEKRSEPNADSNNMTGGEPIDPRDLDWDGPDDPDNPHNWSSLKKWYTTMTSAFLCLVVTMGSSLYVSSVPELVERYHVSQTLALAGLTFYLLGLSTVIGAPLSEVFGRKPVYLFSLPVSMLFTMGVGLSNGHMRIILPLRFLSGVFASPALSVGSGTILDIFDVDQVSVAMTYFVLSPFLGPVLSPIMAGFATEAKGWRWSEWIQLIAGGLILPFIALMPETHKGIILRKRAKKRNIALKKFSREAQKEFLKTTVTITILRPLKMLVVEPIVFVFSVYVAFIFAILFGFFEAYAVIYRGVYHMSMGISGLPFIGIGVGLWIGAFFYLYIDRKYLFPKPPAGTQPLTEKERTSKRTTPYRGARDAETGELLPVVPEKFLIACKFGSVALPIGLFWQAWTARSDVHWMAPVAAGVPFGFGLILIFFSVLMYFSTCYPPLTVASCLAANNLLRYVMSSVFPLFTIQMYTKMKIKWASTLFALVCVVMIPIPWVFEKWGSKLRHKSQFGYAAMEKEAETEGGIDDVNAVDGELNLTRMTTLRTMETDPSTREKPGERLSLRRTHTQPVPASFDREDGQHAQNRNEPISNSLYSAIKDNEDGYSYTEMATDASARMV.

2 stretches are compositionally biased toward polar residues: residues 1–20 (MPSSLTKTESNSDPRTNIQQ) and 28–45 (NVTNSGNLDSTSSSTGSI). Positions 1 to 81 (MPSSLTKTES…LDWDGPDDPD (81 aa)) are disordered. Topologically, residues 1-99 (MPSSLTKTES…KKWYTTMTSA (99 aa)) are cytoplasmic. A helical transmembrane segment spans residues 100–120 (FLCLVVTMGSSLYVSSVPELV). Residues 121-128 (ERYHVSQT) are Extracellular-facing. A helical membrane pass occupies residues 129–149 (LALAGLTFYLLGLSTVIGAPL). The Cytoplasmic portion of the chain corresponds to 150–157 (SEVFGRKP). A helical membrane pass occupies residues 158–178 (VYLFSLPVSMLFTMGVGLSNG). Topologically, residues 179–187 (HMRIILPLR) are extracellular. The helical transmembrane segment at 188–208 (FLSGVFASPALSVGSGTILDI) threads the bilayer. Topologically, residues 209–215 (FDVDQVS) are cytoplasmic. The chain crosses the membrane as a helical span at residues 216-236 (VAMTYFVLSPFLGPVLSPIMA). At 237–246 (GFATEAKGWR) the chain is on the extracellular side. The chain crosses the membrane as a helical span at residues 247–267 (WSEWIQLIAGGLILPFIALMP). At 268–316 (ETHKGIILRKRAKKRNIALKKFSREAQKEFLKTTVTITILRPLKMLVVE) the chain is on the cytoplasmic side. A helical transmembrane segment spans residues 317–337 (PIVFVFSVYVAFIFAILFGFF). Residues 338–355 (EAYAVIYRGVYHMSMGIS) lie on the Extracellular side of the membrane. The helical transmembrane segment at 356-376 (GLPFIGIGVGLWIGAFFYLYI) threads the bilayer. The Cytoplasmic segment spans residues 377–423 (DRKYLFPKPPAGTQPLTEKERTSKRTTPYRGARDAETGELLPVVPEK). Residues 387–408 (AGTQPLTEKERTSKRTTPYRGA) are disordered. The helical transmembrane segment at 424–444 (FLIACKFGSVALPIGLFWQAW) threads the bilayer. The Extracellular portion of the chain corresponds to 445–456 (TARSDVHWMAPV). A helical transmembrane segment spans residues 457–477 (AAGVPFGFGLILIFFSVLMYF). Topologically, residues 478-486 (STCYPPLTV) are cytoplasmic. The chain crosses the membrane as a helical span at residues 487–509 (ASCLAANNLLRYVMSSVFPLFTI). Over 510–518 (QMYTKMKIK) the chain is Extracellular. A helical membrane pass occupies residues 519-539 (WASTLFALVCVVMIPIPWVFE). The Cytoplasmic portion of the chain corresponds to 540–659 (KWGSKLRHKS…MATDASARMV (120 aa)). Residues 587–602 (METDPSTREKPGERLS) show a composition bias toward basic and acidic residues. Positions 587-631 (METDPSTREKPGERLSLRRTHTQPVPASFDREDGQHAQNRNEPIS) are disordered. Residues Thr589, Thr606, and Thr608 each carry the phosphothreonine modification. Positions 622–631 (HAQNRNEPIS) are enriched in polar residues. A phosphoserine mark is found at Ser633 and Ser646.

Belongs to the major facilitator superfamily. DHA1 family. Polyamines/proton antiporter (TC 2.A.1.2.16) subfamily.

It is found in the cell membrane. Cell membrane polyamine/proton antiporter, involved in the detoxification of excess polyamines in the cytoplasm. Recognizes spermidine, spermine and the antimalarial drug quinidine, but not quinine, chloroquine and mefloquine. This is Polyamine transporter 4 (TPO4) from Saccharomyces cerevisiae (strain ATCC 204508 / S288c) (Baker's yeast).